A 115-amino-acid chain; its full sequence is Large ribosomal subunit protein bL20 (115 aa).

This sequence belongs to the bacterial ribosomal protein bL20 family.

Functionally, binds directly to 23S ribosomal RNA and is necessary for the in vitro assembly process of the 50S ribosomal subunit. It is not involved in the protein synthesizing functions of that subunit. The sequence is that of Large ribosomal subunit protein bL20 from Chlorobium limicola (strain DSM 245 / NBRC 103803 / 6330).